The sequence spans 218 residues: Probable transaldolase (218 aa).

Lys-84 (schiff-base intermediate with substrate) is an active-site residue.

It belongs to the transaldolase family. Type 3B subfamily.

The protein localises to the cytoplasm. It carries out the reaction D-sedoheptulose 7-phosphate + D-glyceraldehyde 3-phosphate = D-erythrose 4-phosphate + beta-D-fructose 6-phosphate. It functions in the pathway carbohydrate degradation; pentose phosphate pathway; D-glyceraldehyde 3-phosphate and beta-D-fructose 6-phosphate from D-ribose 5-phosphate and D-xylulose 5-phosphate (non-oxidative stage): step 2/3. Functionally, transaldolase is important for the balance of metabolites in the pentose-phosphate pathway. The sequence is that of Probable transaldolase from Sulfurihydrogenibium sp. (strain YO3AOP1).